Here is a 469-residue protein sequence, read N- to C-terminus: Ubiquitin carboxyl-terminal hydrolase MINDY-1 (469 aa).

A disordered region spans residues 1 to 105 (MEHHQPEHPA…RLQELPQSPR (105 aa)). The segment covering 23 to 44 (ENHKVLSEPKEHPQDKDAKEAD) has biased composition (basic and acidic residues). Ser-103 carries the post-translational modification Phosphoserine. Cys-137 functions as the Nucleophile in the catalytic mechanism. His-319 (proton acceptor) is an active-site residue. A ubiquitin-binding domain (UBD) region spans residues 388–428 (QVDQDYLIALSLQQQQPPPQGTSGLSDLELAQQLQQEEYQQ). The tract at residues 401–469 (QQQPPPQGTS…PKQESDCVLL (69 aa)) is disordered. Low complexity predominate over residues 415 to 448 (LELAQQLQQEEYQQHQAAQAAPARAPSPQGRGAA). A Phosphoserine modification is found at Ser-441. The segment covering 453 to 469 (AAERRQRPKQESDCVLL) has biased composition (basic and acidic residues).

It belongs to the MINDY deubiquitinase family. FAM63 subfamily.

It catalyses the reaction Thiol-dependent hydrolysis of ester, thioester, amide, peptide and isopeptide bonds formed by the C-terminal Gly of ubiquitin (a 76-residue protein attached to proteins as an intracellular targeting signal).. Functionally, hydrolase that can specifically remove 'Lys-48'-linked conjugated ubiquitin from proteins. Has exodeubiquitinase activity and has a preference for long polyubiquitin chains. May play a regulatory role at the level of protein turnover. The sequence is that of Ubiquitin carboxyl-terminal hydrolase MINDY-1 (MINDY1) from Bos taurus (Bovine).